A 94-amino-acid chain; its full sequence is uncharacterized protein (94 aa).

2 consecutive transmembrane segments (helical) span residues 7–24 (IFFI…SFNV) and 39–61 (AVPI…LLFL). The tract at residues 68–94 (TRKQKREDSPTSAPTGGVSSPEHVDVP) is disordered.

It is found in the cell membrane. This is an uncharacterized protein from Treponema pallidum (strain Nichols).